The sequence spans 278 residues: Shikimate dehydrogenase (NADP(+)) (278 aa).

Shikimate is bound by residues 19-21 (SRS) and Thr-66. Lys-70 serves as the catalytic Proton acceptor. 2 residues coordinate shikimate: Asn-91 and Asp-106. NADP(+) is bound by residues 129–133 (GAGGA) and Phe-221. Tyr-223 serves as a coordination point for shikimate. Residue Gly-242 participates in NADP(+) binding.

It belongs to the shikimate dehydrogenase family. As to quaternary structure, homodimer.

It catalyses the reaction shikimate + NADP(+) = 3-dehydroshikimate + NADPH + H(+). It participates in metabolic intermediate biosynthesis; chorismate biosynthesis; chorismate from D-erythrose 4-phosphate and phosphoenolpyruvate: step 4/7. Involved in the biosynthesis of the chorismate, which leads to the biosynthesis of aromatic amino acids. Catalyzes the reversible NADPH linked reduction of 3-dehydroshikimate (DHSA) to yield shikimate (SA). The chain is Shikimate dehydrogenase (NADP(+)) from Anaeromyxobacter dehalogenans (strain 2CP-C).